A 540-amino-acid chain; its full sequence is MSTKKGGPKAASGKGQALLPGSKLRATAGKPRESRQLQRKASHPSKGSFSENPQAPAAPTAEDKAAIVIQCAFRQYLARRELARRCQERQEYLDEMEKLQKEAYLALVRQEQEAARRQREKEEAEERARREELQRRRRLLEAAFEGDLGEIRQVLKEVEQLMTREGVGYDEDGKARRLQRRVATVECEDSHGNTPLSEAAAGGQTMAIQLLAELGANPNTKGAFGRTPLYRAAFGGHLEAVEELLKIGADPRMYADDGSTPEQVASLAAVASVLQSWDLSLTEAMLKNMEAEQQRRAQEAQKHKENEAKRINIKVQQLAKEQQKCQKELQQAYCELNRRIMEHDKCERKFMGNTELTLQAIKDAEAQVDRLQQEAQKAEETLAMARLELREQTPEDEDTEPGLKCRVTELHDVLMKDVGDRIRADGRWPLVIDPSGQAATFLRYQDTNYVDTLNPEHLRPERIRLALLGALRYGKPLVFDLRQVNLFPVVQQQLEVVQTGLAQALLNRGLLAKEGYLSLLRPTDGPEYDPSQFQEARLEN.

The span at 1-17 (MSTKKGGPKAASGKGQA) shows a compositional bias: low complexity. The disordered stretch occupies residues 1–62 (MSTKKGGPKA…PQAPAAPTAE (62 aa)). Residues 62 to 91 (EDKAAIVIQCAFRQYLARRELARRCQERQE) form the IQ domain. ANK repeat units lie at residues 191-220 (HGNTPLSEAAAGGQTMAIQLLAELGANPNT) and 224-253 (FGRTPLYRAAFGGHLEAVEELLKIGADPRM). The stretch at 281-388 (LTEAMLKNME…EETLAMARLE (108 aa)) forms a coiled coil.

The sequence is that of IQ motif and ankyrin repeat domain-containing protein 1 from Mus musculus (Mouse).